Consider the following 187-residue polypeptide: MVCSPVTLRIAPPDRRFSRSAIPEQIISSTLSSPSSNAPDPCAKETVLSALKEKKKKRTVEEEDQIFLDGQENKRSCLVDGLTDASSAFKVPRPGPDTLQFTVDVFHFANDSRNMIYITCHLKVTLAEQDPDELNKACSFSKPSNSWFPVEGLADICQCCNKGDCGTPSHSRRQPRVVSQWSTSASL.

The disordered stretch occupies residues 166 to 187; the sequence is GTPSHSRRQPRVVSQWSTSASL. Polar residues predominate over residues 177–187; sequence VVSQWSTSASL.

In terms of tissue distribution, expressed in spleen, thymus, pancreas, testis, ovary, small intestine, colon and lymphocytes.

The protein is POM121 and ZP3 fusion protein (POMZP3) of Homo sapiens (Human).